The sequence spans 425 residues: Histidine--tRNA ligase (425 aa).

It belongs to the class-II aminoacyl-tRNA synthetase family. In terms of assembly, homodimer.

The protein localises to the cytoplasm. It carries out the reaction tRNA(His) + L-histidine + ATP = L-histidyl-tRNA(His) + AMP + diphosphate + H(+). This chain is Histidine--tRNA ligase, found in Histophilus somni (strain 2336) (Haemophilus somnus).